Consider the following 238-residue polypeptide: Monocyte to macrophage differentiation factor (238 aa).

The Cytoplasmic portion of the chain corresponds to 1-28 (MRFKNRFQRFMNHRAPANGRYKPTCYEH). Residues 29–49 (AANCYTHAFLIVPAIVGSALL) form a helical membrane-spanning segment. Residues 50 to 61 (HRLSDDCWEKIT) lie on the Lumenal side of the membrane. Residues 62–82 (AWIYGMGLCALFIVSTVFHIV) traverse the membrane as a helical segment. Residues 83–101 (SWKKSHLRTVEHCFHMCDR) lie on the Cytoplasmic side of the membrane. A helical membrane pass occupies residues 102–122 (MVIYFFIAASYAPWLNLRELG). At 123–124 (PL) the chain is on the lumenal side. Residues 125–145 (ASHMRWFIWLMAAGGTIYVFL) form a helical membrane-spanning segment. At 146 to 151 (YHEKYK) the chain is on the cytoplasmic side. A helical transmembrane segment spans residues 152 to 172 (VVELFFYLTMGFSPALVVTSM). Over 173 to 174 (NN) the chain is Lumenal. A helical membrane pass occupies residues 175–195 (TDGLQELACGGLIYCLGVVFF). Over 196 to 198 (KSD) the chain is Cytoplasmic. A helical membrane pass occupies residues 199–219 (GIIPFAHAIWHLFVATAAAVH). The Lumenal portion of the chain corresponds to 220–238 (YYAIWKYLYRSPTDFMRHL).

The protein belongs to the ADIPOR family. Exhibits relatively ubiquitous expression with preferential expression in mature (in vitro differentiated) macrophages.

The protein localises to the late endosome membrane. It is found in the lysosome membrane. In terms of biological role, involved in the dynamics of lysosomal membranes associated with microglial activation following brain lesion. The polypeptide is Monocyte to macrophage differentiation factor (Homo sapiens (Human)).